The chain runs to 330 residues: Probable pectinesterase 55 (330 aa).

Residues 1–24 form the signal peptide; that stretch reads MGTHRIILGLAALCCFCLPHLIEA. Asn-38 and Asn-52 each carry an N-linked (GlcNAc...) asparagine glycan. Residue Asp-161 is the Proton donor of the active site. Residue Asp-182 is the Nucleophile of the active site. Substrate contacts are provided by Arg-243 and Trp-245. 2 N-linked (GlcNAc...) asparagine glycosylation sites follow: Asn-257 and Asn-292.

The protein belongs to the pectinesterase family.

The protein localises to the secreted. Its subcellular location is the cell wall. The enzyme catalyses [(1-&gt;4)-alpha-D-galacturonosyl methyl ester](n) + n H2O = [(1-&gt;4)-alpha-D-galacturonosyl](n) + n methanol + n H(+). The protein operates within glycan metabolism; pectin degradation; 2-dehydro-3-deoxy-D-gluconate from pectin: step 1/5. In terms of biological role, acts in the modification of cell walls via demethylesterification of cell wall pectin. The sequence is that of Probable pectinesterase 55 (PME55) from Arabidopsis thaliana (Mouse-ear cress).